We begin with the raw amino-acid sequence, 476 residues long: Cysteine--tRNA ligase (476 aa).

Residue Cys28 coordinates Zn(2+). The short motif at 30–40 (PTVYDHTHLGH) is the 'HIGH' region element. Zn(2+) is bound by residues Cys208, His233, and Glu237. Residues 265–269 (KMSKS) carry the 'KMSKS' region motif. Lys268 is an ATP binding site.

Belongs to the class-I aminoacyl-tRNA synthetase family. Requires Zn(2+) as cofactor.

It is found in the cytoplasm. The enzyme catalyses tRNA(Cys) + L-cysteine + ATP = L-cysteinyl-tRNA(Cys) + AMP + diphosphate. This chain is Cysteine--tRNA ligase, found in Methanococcus maripaludis (strain C6 / ATCC BAA-1332).